The following is a 479-amino-acid chain: Ribulose bisphosphate carboxylase large chain (479 aa).

Positions 1-2 (MS) are excised as a propeptide. Positions 123 and 173 each coordinate substrate. Lys175 (proton acceptor) is an active-site residue. Position 177 (Lys177) interacts with substrate. 3 residues coordinate Mg(2+): Lys201, Asp203, and Glu204. Lys201 bears the N6-carboxylysine mark. Ser208 bears the Phosphoserine mark. The active-site Proton acceptor is the His294. The substrate site is built by Arg295 and His327. The residue at position 330 (Thr330) is a Phosphothreonine. Position 379 (Ser379) interacts with substrate.

It belongs to the RuBisCO large chain family. Type I subfamily. As to quaternary structure, heterohexadecamer of 8 large chains and 8 small chains; disulfide-linked. The disulfide link is formed within the large subunit homodimers. Mg(2+) is required as a cofactor. Post-translationally, the disulfide bond which can form in the large chain dimeric partners within the hexadecamer appears to be associated with oxidative stress and protein turnover.

The protein localises to the plastid. It is found in the chloroplast. The enzyme catalyses 2 (2R)-3-phosphoglycerate + 2 H(+) = D-ribulose 1,5-bisphosphate + CO2 + H2O. It carries out the reaction D-ribulose 1,5-bisphosphate + O2 = 2-phosphoglycolate + (2R)-3-phosphoglycerate + 2 H(+). RuBisCO catalyzes two reactions: the carboxylation of D-ribulose 1,5-bisphosphate, the primary event in carbon dioxide fixation, as well as the oxidative fragmentation of the pentose substrate in the photorespiration process. Both reactions occur simultaneously and in competition at the same active site. The sequence is that of Ribulose bisphosphate carboxylase large chain from Brassica oleracea (Wild cabbage).